Here is a 336-residue protein sequence, read N- to C-terminus: Major histocompatibility complex class I-related protein 1 (336 aa).

The signal sequence occupies residues 1 to 18 (MMLLLPLIIVLMMKLSDA). The alpha-1 stretch occupies residues 19 to 105 (RTHSLRYFRL…KQLQHHYNHS (87 aa)). Residues 19–197 (RTHSLRYFRL…EYGKDALQRT (179 aa)) are antigen-binding cleft. Residues 19–298 (RTHSLRYFRL…QESETILLVV (280 aa)) are Extracellular-facing. Tyr25 and Arg27 together coordinate 8-(9H-purin-6-yl)-2-oxa-8-azabicyclo[3.3.1]nona-3,6-diene-4,6-dicarbaldehyde. 5-(2-oxoethylideneamino)-6-(D-ribitylamino)uracil contacts are provided by Arg27, Ser42, and Lys61. Residues Arg27, Ser42, and Lys61 each coordinate 5-(2-oxopropylideneamino)-6-(D-ribitylamino)uracil. Positions 27, 42, and 61 each coordinate 7-hydroxy-6-methyl-8-(1-D-ribityl)lumazine. 2 residues coordinate 8-(9H-purin-6-yl)-2-oxa-8-azabicyclo[3.3.1]nona-3,6-diene-4,6-dicarbaldehyde: Lys61 and His76. Lys61 serves as a coordination point for 2-amino-4-oxopteridine-6-carbaldehyde. A pyridoxal-binding site is contributed by Lys61. Asn103 carries an N-linked (GlcNAc...) asparagine glycan. The tract at residues 106-197 (GFHTYQRMIG…EYGKDALQRT (92 aa)) is alpha-2. Arg112 is an 8-(9H-purin-6-yl)-2-oxa-8-azabicyclo[3.3.1]nona-3,6-diene-4,6-dicarbaldehyde binding site. Residues Arg112, Tyr170, and Gln171 each coordinate 5-(2-oxoethylideneamino)-6-(D-ribitylamino)uracil. 5-(2-oxopropylideneamino)-6-(D-ribitylamino)uracil contacts are provided by Arg112, Tyr170, and Gln171. Arg112, Tyr170, and Gln171 together coordinate 7-hydroxy-6-methyl-8-(1-D-ribityl)lumazine. Cystine bridges form between Cys116–Cys179 and Cys218–Cys274. Residues 198-289 (EPPKVRVNHK…GVHMVLQGFQ (92 aa)) form an alpha-3 region. The Ig-like C1-type domain maps to 200 to 295 (PKVRVNHKET…QGFQESETIL (96 aa)). The segment at 290–298 (ESETILLVV) is connecting peptide. Residues 299-319 (KAVGFIVLAIALAGVGILAWR) traverse the membrane as a helical segment. Over 320–336 (KRPRGKNKVICLSTPEH) the chain is Cytoplasmic.

This sequence belongs to the MHC class I family. Heterotrimer that consists of MR1, B2M and metabolite antigen. Major classes of metabolite ligands presented by MR1 include riboflavin-related antigens, pyrimidines and ribityl lumazines, nucleobase adducts and folate derivatives. Forms reversible covalent Schiff base complexes with microbial pyrimidine-based metabolite, which serves as a molecular switch triggering complete folding, stable association with B2M and translocation of the ternary complex from endoplasmic reticulum to the plasma membrane. Alternatively, forms non-Schiff base complexes with ribityl lumazines. On antigen-presenting cells, the ternary complex interacts with TCR on MR1-restricted T cells. Interacts with TAPBP and TAPBPL chaperones in the endoplasmic reticulum. TAPBP associated or not with MHC class I peptide loading complex binds ligand-free MR1 or MR1-B2M complex, providing for stable MR1 pools ready for metabolite antigen processing. TAPBPL interacts with MR1 in a ligand-independent way; this interaction may stabilize MR1 pool and facilitate ligand loading and dissociation. Structurally, MR1-B2M heterodimer adopts a topology similar to classical MHC class I molecules, with alpha-1 and alpha-2 domains of MR1 forming the antigen-binding cleft composed of two alpha-helices resting on a floor of 7-stranded anti-parallel beta-pleated sheet. MR1-B2M heterodimer (via alpha-helices) interacts with TCR (via CDR domains). In terms of processing, N-glycosylated.

The protein resides in the cell membrane. The protein localises to the endoplasmic reticulum membrane. Its subcellular location is the golgi apparatus membrane. It localises to the early endosome membrane. It is found in the late endosome membrane. Antigen-presenting molecule specialized in displaying microbial pyrimidine-based metabolites to alpha-beta T cell receptors (TCR) on innate-type mucosal-associated invariant T (MAIT) cells. In complex with B2M preferentially presents riboflavin-derived metabolites to semi-invariant TCRs on MAIT cells, guiding immune surveillance of the microbial metabolome at mucosal epithelial barriers. Signature pyrimidine-based microbial antigens are generated via non-enzymatic condensation of metabolite intermediates of the riboflavin pathway with by-products arising from other metabolic pathways such as glycolysis. Typical potent antigenic metabolites are 5-(2-oxoethylideneamino)-6-D-ribitylaminouracil (5-OE-RU) and 5-(2-oxopropylideneamino)-6-D-ribitylaminouracil (5-OP-RU), products of condensation of 5-amino-6-D-ribityaminouracil (5-A-RU) with glyoxal or methylglyoxal by-products, respectively. May present microbial antigens to various MAIT cell subsets, providing for unique recognition of diverse microbes, including pathogens that do not synthesize riboflavin. Upon antigen recognition, elicits rapid innate-type MAIT cell activation to eliminate pathogenic microbes by directly killing infected cells. During T cell development, drives thymic selection and post-thymic terminal differentiation of MAIT cells in a process dependent on commensal microflora. Acts as an immune sensor of cancer cell metabolome. May present a tumor-specific or -associated metabolite essential for cancer cell survival to a pan-cancer TCR on a non-MAIT CD8-positive T cell clone, triggering T cell-mediated killing of a wide range of cancer cell types. May present tumor-enriched pyridoxal and pyridoxal 5'-phosphate antigens, enabling preferential recognition of cancer cells. Presents nucleobase carbonyl adducts generated during oxidative stress. Captures M3Ade, a nucleobase adduct composed of one adenine modified by a malondialdehyde trimer, for recognition by MR1-restricted T cell clones expressing a polyclonal TCR repertoire. This Bos taurus (Bovine) protein is Major histocompatibility complex class I-related protein 1.